We begin with the raw amino-acid sequence, 229 residues long: Sodium channel modifier 1 (229 aa).

At S2 the chain carries Phosphoserine. Residues 4–20 (KREGDDWSQLNVLKKRR) carry the Bipartite nuclear localization signal motif. The Matrin-type zinc-finger motif lies at 42 to 74 (FACAICPHRPVLDTLAMLTAHRAGKKHLSSLKL). K67 is covalently cross-linked (Glycyl lysine isopeptide (Lys-Gly) (interchain with G-Cter in SUMO2)). Disordered regions lie at residues 80-105 (QTGK…EAPL) and 128-187 (RRKH…TKRR). Residues 82-92 (GKGTEQNPRQQ) show a composition bias toward polar residues. Basic and acidic residues predominate over residues 157–171 (ISKEPEPRERSDAKE). Phosphoserine occurs at positions 182 and 218. The required for interaction with LUC7L2 stretch occupies residues 187 to 229 (RVLNHYLTLRSSGWVPDGRGRWIKDENVEFDSDEEEPPDLPLD).

In terms of assembly, component of the minor spliceosome. Within this complex, interacts with RNF113A, as well as with SF3B1/SF3b155, SF3B2/SF3b145, SF3B3/SF3b130 and CDC5L. May interact with LUC7L2 and SNRNP70.

It localises to the nucleus. Its subcellular location is the nucleoplasm. The protein resides in the nucleus speckle. As a component of the minor spliceosome, involved in the splicing of U12-type introns in pre-mRNAs. Plays a role in the regulation of primary cilia length and Hedgehog signaling. This chain is Sodium channel modifier 1 (Scnm1), found in Mus musculus (Mouse).